Consider the following 335-residue polypeptide: Phosphatidylglycerol--prolipoprotein diacylglyceryl transferase (335 aa).

Transmembrane regions (helical) follow at residues 31 to 51, 67 to 87, and 100 to 120; these read IYWYGIIFVCGFLLAILTYSL, YIFLAIPMTIIGARLWSLAIG, and LAIQGGVIAGVLSAAIYFPLI. Arg-163 lines the a 1,2-diacyl-sn-glycero-3-phospho-(1'-sn-glycerol) pocket. The next 3 helical transmembrane spans lie at 213–233, 235–255, and 277–297; these read PLFLYESFFNVIVFVFIYFGL, YIKQLKIGFVSMSYFFFYGVI, and SLLLIFGVLGALYVQFIAPIL.

Belongs to the Lgt family.

It localises to the cell membrane. The enzyme catalyses L-cysteinyl-[prolipoprotein] + a 1,2-diacyl-sn-glycero-3-phospho-(1'-sn-glycerol) = an S-1,2-diacyl-sn-glyceryl-L-cysteinyl-[prolipoprotein] + sn-glycerol 1-phosphate + H(+). It functions in the pathway protein modification; lipoprotein biosynthesis (diacylglyceryl transfer). Catalyzes the transfer of the diacylglyceryl group from phosphatidylglycerol to the sulfhydryl group of the N-terminal cysteine of a prolipoprotein, the first step in the formation of mature lipoproteins. The sequence is that of Phosphatidylglycerol--prolipoprotein diacylglyceryl transferase from Ureaplasma urealyticum serovar 10 (strain ATCC 33699 / Western).